Here is a 960-residue protein sequence, read N- to C-terminus: Probable RNA-binding protein 19 (960 aa).

The RRM 1 domain occupies 2–79; that stretch reads SRLIVKNLPN…SRITVEFCKS (78 aa). Disordered stretches follow at residues 85–119 and 149–294; these read KPRA…KKKK and WAND…TTCH. A phosphoserine mark is found at serine 174, serine 176, and serine 180. Acidic residues predominate over residues 176-194; sequence SGQESEEEGAGEDLEEEAS. The span at 273 to 286 shows a compositional bias: basic and acidic residues; the sequence is RPPEARAETEKPAN. RRM domains follow at residues 294 to 369 and 402 to 480; these read HTVK…REKN and GRLF…PSTI. Residue lysine 481 forms a Glycyl lysine isopeptide (Lys-Gly) (interchain with G-Cter in SUMO2) linkage. Residues 491-513 are disordered; that stretch reads LGSSSYKKKKEAQDKANSASSHN. Residues 587–659 form the RRM 4 domain; it reads TVILVKNLPA…VPLYLEWAPV (73 aa). The interval 667–729 is disordered; the sequence is PQKKKLQDTP…EEEEEESLPG (63 aa). 2 stretches are compositionally biased toward acidic residues: residues 689 to 706 and 714 to 726; these read TVPD…EEGA and EEEE…EEES. 2 RRM domains span residues 730-811 and 832-912; these read CTLF…ISER and SKIL…WADS. Serine 936, serine 949, and serine 951 each carry phosphoserine.

It belongs to the RRM MRD1 family. In terms of tissue distribution, expressed in the crypts of Lieberkuhn of the intestine and in intestinal neoplasia (at protein level).

Its subcellular location is the nucleus. The protein resides in the nucleolus. The protein localises to the nucleoplasm. It localises to the cytoplasm. It is found in the chromosome. Functionally, plays a role in embryo pre-implantation development. This chain is Probable RNA-binding protein 19 (RBM19), found in Homo sapiens (Human).